Reading from the N-terminus, the 561-residue chain is ATP-dependent RNA helicase MRH4, mitochondrial (561 aa).

The N-terminal 26 residues, 1–26 (MSLFFKPVISPQWSFPVLLKIGVRSY), are a transit peptide targeting the mitochondrion. The tract at residues 29–72 (GPRTKHKGNSPLASVPTGSSNKNRKQKAKGKKGNKKNDPDQAFN) is disordered. A compositionally biased stretch (basic residues) spans 50–62 (KNRKQKAKGKKGN). The Q motif motif lies at 98 to 129 (SNFDQLLILPPVRDAVKEIISKESLKLQDSRK). Residues 131–319 (TSENIIPSPI…NINHLIFCSA (189 aa)) enclose the Helicase ATP-binding domain. An ATP-binding site is contributed by 144–151 (AIKRISKN). The short motif at 267–270 (SIRM) is the DEAD box element. Residues 350–539 (ALDFKVINSA…KQGGRVFMLT (190 aa)) form the Helicase C-terminal domain.

The protein belongs to the DEAD box helicase family. MRH4 subfamily.

It localises to the mitochondrion. It carries out the reaction ATP + H2O = ADP + phosphate + H(+). Its function is as follows. ATP-binding RNA helicase involved in mitochondrial RNA metabolism. Required for maintenance of mitochondrial DNA. The sequence is that of ATP-dependent RNA helicase MRH4, mitochondrial (MRH4) from Saccharomyces cerevisiae (strain YJM789) (Baker's yeast).